The primary structure comprises 235 residues: Small ribosomal subunit protein uS3 (235 aa).

The 69-residue stretch at 39-107 (VRSYVKKKLI…PAQVNISEIR (69 aa)) folds into the KH type-2 domain.

The protein belongs to the universal ribosomal protein uS3 family. Part of the 30S ribosomal subunit. Forms a tight complex with proteins S10 and S14.

Functionally, binds the lower part of the 30S subunit head. Binds mRNA in the 70S ribosome, positioning it for translation. This chain is Small ribosomal subunit protein uS3, found in Buchnera aphidicola subsp. Cinara cedri (strain Cc).